Here is a 260-residue protein sequence, read N- to C-terminus: Eukaryotic translation initiation factor 3 subunit G-2 (260 aa).

The RRM domain maps to 180–258 (CAVRISNLSE…LILSVEWSKP (79 aa)).

Belongs to the eIF-3 subunit G family. In terms of assembly, component of the eukaryotic translation initiation factor 3 (eIF-3) complex. The eIF-3 complex interacts with pix.

The protein resides in the cytoplasm. RNA-binding component of the eukaryotic translation initiation factor 3 (eIF-3) complex, which is involved in protein synthesis of a specialized repertoire of mRNAs and, together with other initiation factors, stimulates binding of mRNA and methionyl-tRNAi to the 40S ribosome. The eIF-3 complex specifically targets and initiates translation of a subset of mRNAs involved in cell proliferation. This subunit can bind 18S rRNA. The polypeptide is Eukaryotic translation initiation factor 3 subunit G-2 (Drosophila grimshawi (Hawaiian fruit fly)).